The primary structure comprises 483 residues: MSLEDSLRSLSLDYLNLLINGQAFSDVTFSVEGRLVHAHRCILAARSLFFRKFFCGPDPPPPSGNLDSPGGPRVNSPRPGGVIPVNSVGYEVFLLMLQFLYSGQVSIVPQKHEPRPNCGERACWHTHCTSAVDLALDTLAAARYFGVEQLALLTQKQLASMVEKASIEDVMKVLLASRKQDMHQLWTTCSHLVAKSGLPPEVLAKHLPIDIVAKIEELRLKSTLARRSLIPHHHHHHHHHGHHDMGAAADLEDQKIRRMRRALDSSDVELVKLMVMGEGLNLDEALALPYAVENCSREVVKALLELGAADVNYPSGPSGKTPLHIAAEMVSPDMVAVLLDHHADPNVRTVDGVTPLDILRTLTSDFLFKGAVPGLTHIEPNKLRLCLELVQSAALVMSREEGNANANSSNNNNAPCSAATPIYPPMNEDHNSSSSNANLNLDSRLVYLNLGAAQMSGDDDSSHGSHREAMNQAMYHHHHSHDY.

In terms of domain architecture, BTB spans 25-109 (SDVTFSVEGR…LYSGQVSIVP (85 aa)). The segment at 115–129 (RPNCGERACWHTHCT) adopts a C2HC NPR-type zinc-finger fold. Residues Cys-118, Cys-123, His-125, and Cys-128 each coordinate Zn(2+). ANK repeat units lie at residues 254-283 (QKIRRMRRALDSSDVELVKLMVMGEGLNLD), 284-313 (EALALPYAVENCSREVVKALLELGAADVNY), 318-347 (SGKTPLHIAAEMVSPDMVAVLLDHHADPNV), and 351-385 (DGVTPLDILRTLTSDFLFKGAVPGLTHIEPNKLRL). Residues 401–437 (EGNANANSSNNNNAPCSAATPIYPPMNEDHNSSSSNA) are disordered. Low complexity predominate over residues 403–419 (NANANSSNNNNAPCSAA).

This sequence belongs to the plant 'ANKYRIN-BTB/POZ' family. 'NOOT-BOP-COCH-like' (NBCL) subfamily. Homodimer. Interacts with APP1 around the plasma membrane and in the nucleus; this interaction disturbs APP1-mediated regulation of the nuclear transcription factor Y subunit (NF-YA1). Mainly expressed in root nodules, to a lesser extent in shoot apical meristems (SAM) and root meristems (RM), and barely in leaves, non-nodulating roots and root apical meristems (RAM).

It is found in the nucleus. The protein localises to the cytoplasm. Its subcellular location is the cell membrane. It participates in protein modification; protein ubiquitination. Functionally, may act as a substrate-specific adapter of an E3 ubiquitin-protein ligase complex (CUL3-RBX1-BTB) which mediates the ubiquitination and subsequent proteasomal degradation of target proteins. Transcriptional co-regulator involved in the promotion of leaf and floral meristem fate and determinacy. Required for the abscission of senescent organs, probably by regulating the cell wall disorganization in abscission zones (AZs, e.g. pulvini at the base of leaves). Involved in the coordination of the symbiotic nodule developmental program; promotes the formation of root nodules by interacting directly with APP1 to modulate the expression of the nuclear transcription factor Y subunit (NF-YA1), a key nodulin. Necessary for the robust maintenance of nodule identity throughout the nodule developmental program. The chain is BTB/POZ domain and ankyrin repeat-containing protein NBCL from Lotus japonicus (Lotus corniculatus var. japonicus).